The primary structure comprises 302 residues: Glycine--tRNA ligase alpha subunit (302 aa).

Belongs to the class-II aminoacyl-tRNA synthetase family. Tetramer of two alpha and two beta subunits.

It is found in the cytoplasm. It catalyses the reaction tRNA(Gly) + glycine + ATP = glycyl-tRNA(Gly) + AMP + diphosphate. In Xanthomonas axonopodis pv. citri (strain 306), this protein is Glycine--tRNA ligase alpha subunit.